We begin with the raw amino-acid sequence, 803 residues long: Volume-regulated anion channel subunit LRRC8C (803 aa).

Over 1–22 (MIPVTEFRQFSEQQPAFRVLKP) the chain is Cytoplasmic. Residues 23–43 (WWDVFTDYLSVAMLMIGVFGC) form a helical membrane-spanning segment. Topologically, residues 44 to 125 (TLQVMQDKII…YERALHWYAK (82 aa)) are extracellular. 2 cysteine pairs are disulfide-bonded: cysteine 54–cysteine 308 and cysteine 115–cysteine 293. 2 N-linked (GlcNAc...) asparagine glycosylation sites follow: asparagine 64 and asparagine 70. Residues 126 to 146 (YFPYLVLIHTLVFMLCSNFWF) traverse the membrane as a helical segment. Topologically, residues 147–266 (KFPGSSSKIE…ILYAMYVRQT (120 aa)) are cytoplasmic. The disordered stretch occupies residues 177–209 (EVSGEDSEEKDNRKNNMSRSNTTQSGPEGSLVN). A compositionally biased stretch (polar residues) spans 191–209 (NNMSRSNTTQSGPEGSLVN). A phosphoserine mark is found at serine 212 and serine 215. A helical transmembrane segment spans residues 267–287 (VLKVIKFLIIIAYNSALVSKV). Topologically, residues 288–320 (QFTVDCNVDIQDMTGYKNFSCNHTMAHLFSKLS) are extracellular. A helical membrane pass occupies residues 321–341 (FCYLCFVSIYGLTCLYTLYWL). Residues 342-803 (FYRSLKEYSF…SDVREQMKTE (462 aa)) are Cytoplasmic-facing. 17 LRR repeats span residues 397-419 (ENKL…QKLQ), 420-443 (TNAH…VFEI), 446-465 (LQSL…TIAQ), 468-490 (NLQE…SFLK), 492-513 (NLKV…MYGL), 515-536 (NLEE…VTLE), 543-563 (SLKI…VVDV), 566-586 (HLQK…NNLK), 590-611 (NLTE…VFSL), 613-634 (SLQE…VSFQ), 638-659 (KLTV…IKKL), 661-682 (SLER…LFLC), 684-705 (KIRY…IGVL), 707-728 (SLQY…LYFC), 730-751 (KLKT…IGNL), 753-774 (FLSY…LGDC), and 776-799 (ALKR…VREQ).

It belongs to the LRRC8 family. Heterohexamer; oligomerizes with other LRRC8 proteins (LRRC8A, LRRC8B, LRRC8D and/or LRRC8E) to form a heterohexamer. Homoheptamer; inactive, likely because it is not targeted to the plasma membrane in the absence of LRRC8A. In vivo, the subunit composition may depend primarily on expression levels, and heterooligomeric channels containing various proportions of the different LRRC8 proteins may coexist.

Its subcellular location is the cell membrane. The protein resides in the endoplasmic reticulum membrane. The enzyme catalyses chloride(in) = chloride(out). The catalysed reaction is iodide(out) = iodide(in). It catalyses the reaction taurine(out) = taurine(in). It carries out the reaction 2',3'-cGAMP(out) = 2',3'-cGAMP(in). In terms of biological role, non-essential component of the volume-regulated anion channel (VRAC, also named VSOAC channel), an anion channel required to maintain a constant cell volume in response to extracellular or intracellular osmotic changes. The VRAC channel conducts iodide better than chloride and can also conduct organic osmolytes like taurine. Plays a redundant role in the efflux of amino acids, such as aspartate and glutamate, in response to osmotic stress. The VRAC channel also mediates transport of immunoreactive cyclic dinucleotide GMP-AMP (2'-3'-cGAMP), an immune messenger produced in response to DNA virus in the cytosol. Channel activity requires LRRC8A plus at least one other family member (LRRC8B, LRRC8C, LRRC8D or LRRC8E); channel characteristics depend on the precise subunit composition. The sequence is that of Volume-regulated anion channel subunit LRRC8C from Bos taurus (Bovine).